Here is a 420-residue protein sequence, read N- to C-terminus: UDP-N-acetylglucosamine 1-carboxyvinyltransferase (420 aa).

Lys22–Asn23 is a phosphoenolpyruvate binding site. Arg91 lines the UDP-N-acetyl-alpha-D-glucosamine pocket. Cys115 (proton donor) is an active-site residue. Cys115 carries the 2-(S-cysteinyl)pyruvic acid O-phosphothioketal modification. UDP-N-acetyl-alpha-D-glucosamine contacts are provided by residues Arg120–Leu124, Lys160–Val163, Asp305, and Ile327.

It belongs to the EPSP synthase family. MurA subfamily.

It localises to the cytoplasm. The catalysed reaction is phosphoenolpyruvate + UDP-N-acetyl-alpha-D-glucosamine = UDP-N-acetyl-3-O-(1-carboxyvinyl)-alpha-D-glucosamine + phosphate. It participates in cell wall biogenesis; peptidoglycan biosynthesis. In terms of biological role, cell wall formation. Adds enolpyruvyl to UDP-N-acetylglucosamine. The sequence is that of UDP-N-acetylglucosamine 1-carboxyvinyltransferase from Pectobacterium atrosepticum (strain SCRI 1043 / ATCC BAA-672) (Erwinia carotovora subsp. atroseptica).